The primary structure comprises 395 residues: Imidazolonepropionase (395 aa).

Fe(3+) is bound by residues His-72 and His-74. Positions 72 and 74 each coordinate Zn(2+). 4-imidazolone-5-propanoate-binding residues include Arg-81, Tyr-144, and His-174. An N-formimidoyl-L-glutamate-binding site is contributed by Tyr-144. His-231 serves as a coordination point for Fe(3+). His-231 lines the Zn(2+) pocket. Residue Glu-234 coordinates 4-imidazolone-5-propanoate. Residue Asp-306 coordinates Fe(3+). Position 306 (Asp-306) interacts with Zn(2+).

It belongs to the metallo-dependent hydrolases superfamily. HutI family. The cofactor is Zn(2+). It depends on Fe(3+) as a cofactor.

The protein resides in the cytoplasm. The catalysed reaction is 4-imidazolone-5-propanoate + H2O = N-formimidoyl-L-glutamate. It functions in the pathway amino-acid degradation; L-histidine degradation into L-glutamate; N-formimidoyl-L-glutamate from L-histidine: step 3/3. In terms of biological role, catalyzes the hydrolytic cleavage of the carbon-nitrogen bond in imidazolone-5-propanoate to yield N-formimidoyl-L-glutamate. It is the third step in the universal histidine degradation pathway. This is Imidazolonepropionase from Pyrobaculum arsenaticum (strain DSM 13514 / JCM 11321 / PZ6).